Consider the following 208-residue polypeptide: Small ribosomal subunit protein uS5 (208 aa).

Basic and acidic residues predominate over residues 1-21; it reads MSDREQRDGGRSAENNNDRKG. Residues 1–38 are disordered; sequence MSDREQRDGGRSAENNNDRKGRNNGRRNDRRNHQDNER. The S5 DRBM domain maps to 41–104; it reads YIERVVTINR…EEARKNFFRV (64 aa).

It belongs to the universal ribosomal protein uS5 family. In terms of assembly, part of the 30S ribosomal subunit. Contacts proteins S4 and S8.

Functionally, with S4 and S12 plays an important role in translational accuracy. Located at the back of the 30S subunit body where it stabilizes the conformation of the head with respect to the body. This chain is Small ribosomal subunit protein uS5, found in Corynebacterium aurimucosum (strain ATCC 700975 / DSM 44827 / CIP 107346 / CN-1) (Corynebacterium nigricans).